Here is a 75-residue protein sequence, read N- to C-terminus: Protein CYSTEINE-RICH TRANSMEMBRANE MODULE 5 (75 aa).

The interval 1-29 (MSQYSQNQYAGAYPTPPVSTGPYVAPPPL) is disordered. The span at 14–29 (PTPPVSTGPYVAPPPL) shows a compositional bias: pro residues. Residues 52–69 (AADGFLKGCLATMLACCV) traverse the membrane as a helical segment.

It belongs to the CYSTM1 family. Heterodimers. Interacts with CYSTM7 and WIH1/CYSTM13. Mostly expressed in roots, stems, rosette leaves and siliques and, to a lower extent, in flowers and cauline leaves.

It is found in the cell membrane. Its subcellular location is the nucleus. In terms of biological role, involved in resistance to abiotic stress. This is Protein CYSTEINE-RICH TRANSMEMBRANE MODULE 5 from Arabidopsis thaliana (Mouse-ear cress).